The following is a 343-amino-acid chain: 3-dehydroquinate synthase (343 aa).

NAD(+)-binding positions include 86–90, 110–111, lysine 123, and lysine 132; these read GALLD and TT. Zn(2+) contacts are provided by glutamate 165, histidine 229, and histidine 243.

It belongs to the sugar phosphate cyclases superfamily. Dehydroquinate synthase family. Co(2+) serves as cofactor. It depends on Zn(2+) as a cofactor. NAD(+) is required as a cofactor.

The protein localises to the cytoplasm. The catalysed reaction is 7-phospho-2-dehydro-3-deoxy-D-arabino-heptonate = 3-dehydroquinate + phosphate. It participates in metabolic intermediate biosynthesis; chorismate biosynthesis; chorismate from D-erythrose 4-phosphate and phosphoenolpyruvate: step 2/7. Catalyzes the conversion of 3-deoxy-D-arabino-heptulosonate 7-phosphate (DAHP) to dehydroquinate (DHQ). This Pyrobaculum neutrophilum (strain DSM 2338 / JCM 9278 / NBRC 100436 / V24Sta) (Thermoproteus neutrophilus) protein is 3-dehydroquinate synthase.